A 777-amino-acid polypeptide reads, in one-letter code: Lon protease (777 aa).

In terms of domain architecture, Lon N-terminal spans 11–204; sequence IPVLPLRDVV…FLMAIMESEI (194 aa). 356–363 provides a ligand contact to ATP; that stretch reads GPPGVGKT. The Lon proteolytic domain occupies 592-773; that stretch reads TNQIGQVIGL…EEVLKLSLEK (182 aa). Catalysis depends on residues Ser679 and Lys722.

The protein belongs to the peptidase S16 family. In terms of assembly, homohexamer. Organized in a ring with a central cavity.

The protein localises to the cytoplasm. The catalysed reaction is Hydrolysis of proteins in presence of ATP.. ATP-dependent serine protease that mediates the selective degradation of mutant and abnormal proteins as well as certain short-lived regulatory proteins. Required for cellular homeostasis and for survival from DNA damage and developmental changes induced by stress. Degrades polypeptides processively to yield small peptide fragments that are 5 to 10 amino acids long. Binds to DNA in a double-stranded, site-specific manner. The chain is Lon protease from Buchnera aphidicola subsp. Acyrthosiphon pisum (strain APS) (Acyrthosiphon pisum symbiotic bacterium).